A 232-amino-acid chain; its full sequence is Vacuolar iron transporter homolog 1 (232 aa).

Over 1–59 the chain is Cytoplasmic; that stretch reads MAIDLGCHVGCASPETKQEETADPTAAPVVVDDVEAAAGGRRPGDGGGVNYVARAQWLR. A helical membrane pass occupies residues 60 to 80; that stretch reads AAVLGANDGLVSVASLMVGVG. Topologically, residues 81–89 are vacuolar; sequence AANGTRRAM. The helical transmembrane segment at 90-110 threads the bilayer; it reads LVSGLAGLVAGACSMAIGEFV. Residues 111–148 are Cytoplasmic-facing; sequence SVYAQCDIQAAQIERARGGKDADGGEEEEELPSPTMAA. Residues 149 to 169 form a helical membrane-spanning segment; the sequence is VASALSFAAGAALPLLAGGFV. Residues 170 to 175 are Vacuolar-facing; sequence RPWAAR. The chain crosses the membrane as a helical span at residues 176–196; sequence VAAVCAASSLGLAGFGVASAY. Over 197–208 the chain is Cytoplasmic; it reads LGGAGVARSGVR. Residues 209 to 229 traverse the membrane as a helical segment; that stretch reads MLVGGWLAMAVTYGVLKLFGM. Over 230-232 the chain is Vacuolar; that stretch reads HGV.

The protein belongs to the CCC1 family.

Its subcellular location is the vacuole membrane. The enzyme catalyses Fe(2+)(in) = Fe(2+)(out). Its function is as follows. Probable vacuolar iron transporter that may be involved in the regulation of iron distribution throughout the plant. This Oryza sativa subsp. japonica (Rice) protein is Vacuolar iron transporter homolog 1.